Consider the following 155-residue polypeptide: MQVKIESLAAQPLFALRVQGPFAQSLGPGFERLMAWSTRHGLQGQWMALYYDNPREVAPEALRADVALTTATTALPSDGEASGIRWDTLAGGLYALAQVRVIDNDFATPWVALFDQALPASGYRPDGGPCFERYLSDGRASGEWLLELGVPVRKS.

The protein belongs to the DNA gyrase inhibitor family. In terms of assembly, interacts with DNA gyrase.

Its subcellular location is the cytoplasm. Functionally, inhibits the supercoiling activity of DNA gyrase. Acts by inhibiting DNA gyrase at an early step, prior to (or at the step of) binding of DNA by the gyrase. It protects cells against toxins that target DNA gyrase, by inhibiting activity of these toxins and reducing the formation of lethal double-strand breaks in the cell. This is DNA gyrase inhibitor from Edwardsiella piscicida.